The following is a 427-amino-acid chain: Histidine--tRNA ligase (427 aa).

This sequence belongs to the class-II aminoacyl-tRNA synthetase family. As to quaternary structure, homodimer.

Its subcellular location is the cytoplasm. The enzyme catalyses tRNA(His) + L-histidine + ATP = L-histidyl-tRNA(His) + AMP + diphosphate + H(+). In Lacticaseibacillus casei (strain BL23) (Lactobacillus casei), this protein is Histidine--tRNA ligase.